We begin with the raw amino-acid sequence, 702 residues long: Phosphatase and actin regulator 4 (702 aa).

Disordered stretches follow at residues 1 to 38 (MEDP…SKFS), 82 to 194 (GVLL…SSGG), and 222 to 363 (NLSV…PFPA). The RPEL 1 repeat unit spans residues 63–88 (EVLERKISMRKPREELVKRGVLLEDP). The segment covering 106-120 (GHTTPIGNARSSSPV) has biased composition (polar residues). Residues serine 116, serine 118, serine 131, and serine 147 each carry the phosphoserine modification. The span at 147 to 156 (STGSQPNSEA) shows a compositional bias: polar residues. Residues 163–173 (VPKPPLLPPKR) show a composition bias toward pro residues. The span at 233–250 (TLPAAPASTNTTATPSLT) shows a compositional bias: low complexity. Phosphoserine is present on residues serine 270 and serine 291. Positions 301–318 (PSTSVPTLESAAAITTKT) are enriched in polar residues. A phosphoserine mark is found at serine 342 and serine 344. Positions 342–362 (SPSPPLPTHIPPEPPRTPPFP) are enriched in pro residues. At threonine 358 the chain carries Phosphothreonine. Phosphoserine is present on serine 427. Threonine 432 is modified (phosphothreonine). A phosphoserine mark is found at serine 443, serine 453, and serine 464. The segment at 473–536 (KVPDDEEEEE…EEDEDESYQS (64 aa)) is disordered. Over residues 486 to 497 (PSTFSEETTPTS) the composition is skewed to low complexity. Positions 508–518 (EEEEKESDSDS) are enriched in acidic residues. 4 positions are modified to phosphoserine: serine 514, serine 516, serine 557, and serine 590. 2 RPEL repeats span residues 583-608 (NTLI…QPKN) and 621-646 (RRLT…RFNE). Residues 592-615 (RPTPEELEQRNILQPKNEADRQAE) form a disordered region. Position 628 is a phosphoserine (serine 628).

Belongs to the phosphatase and actin regulator family. As to quaternary structure, binds PPP1CA and actin.

The protein resides in the cytoplasm. Its subcellular location is the cell projection. It is found in the lamellipodium. In terms of biological role, regulator of protein phosphatase 1 (PP1) required for neural tube and optic fissure closure, and enteric neural crest cell (ENCCs) migration during development. Acts as an activator of PP1 by interacting with PPP1CA and preventing phosphorylation of PPP1CA at 'Thr-320'. During neural tube closure, localizes to the ventral neural tube and activates PP1, leading to down-regulate cell proliferation within cranial neural tissue and the neural retina. Also acts as a regulator of migration of enteric neural crest cells (ENCCs) by activating PP1, leading to dephosphorylation and subsequent activation of cofilin (COF1 or COF2) and repression of the integrin signaling through the RHO/ROCK pathway. This is Phosphatase and actin regulator 4 (PHACTR4) from Pongo abelii (Sumatran orangutan).